Here is a 499-residue protein sequence, read N- to C-terminus: Glutamate--tRNA ligase (499 aa).

The 'HIGH' region motif lies at 12 to 22 (PSPTGHLHIGN). The 'KMSKS' region motif lies at 259–263 (KLSKR). K262 provides a ligand contact to ATP.

Belongs to the class-I aminoacyl-tRNA synthetase family. Glutamate--tRNA ligase type 1 subfamily. In terms of assembly, monomer.

It localises to the cytoplasm. The enzyme catalyses tRNA(Glu) + L-glutamate + ATP = L-glutamyl-tRNA(Glu) + AMP + diphosphate. Functionally, catalyzes the attachment of glutamate to tRNA(Glu) in a two-step reaction: glutamate is first activated by ATP to form Glu-AMP and then transferred to the acceptor end of tRNA(Glu). The chain is Glutamate--tRNA ligase from Lactobacillus acidophilus (strain ATCC 700396 / NCK56 / N2 / NCFM).